Consider the following 811-residue polypeptide: LPS-assembly protein LptD (811 aa).

The N-terminal stretch at methionine 1–alanine 17 is a signal peptide. The segment at methionine 1–arginine 22 is disordered.

This sequence belongs to the LptD family. Component of the lipopolysaccharide transport and assembly complex. Interacts with LptE and LptA.

Its subcellular location is the cell outer membrane. Its function is as follows. Together with LptE, is involved in the assembly of lipopolysaccharide (LPS) at the surface of the outer membrane. The polypeptide is LPS-assembly protein LptD (Ralstonia nicotianae (strain ATCC BAA-1114 / GMI1000) (Ralstonia solanacearum)).